A 338-amino-acid chain; its full sequence is Glycerol-3-phosphate dehydrogenase [NAD(P)+] (338 aa).

Positions 13, 14, and 108 each coordinate NADPH. The sn-glycerol 3-phosphate site is built by Lys108, Gly139, and Ser141. An NADPH-binding site is contributed by Ala143. Lys194, Asp247, Ser257, Arg258, and Asn259 together coordinate sn-glycerol 3-phosphate. Lys194 functions as the Proton acceptor in the catalytic mechanism. Arg258 provides a ligand contact to NADPH. Residues Val282 and Glu284 each coordinate NADPH.

The protein belongs to the NAD-dependent glycerol-3-phosphate dehydrogenase family.

The protein resides in the cytoplasm. The catalysed reaction is sn-glycerol 3-phosphate + NAD(+) = dihydroxyacetone phosphate + NADH + H(+). It catalyses the reaction sn-glycerol 3-phosphate + NADP(+) = dihydroxyacetone phosphate + NADPH + H(+). The protein operates within membrane lipid metabolism; glycerophospholipid metabolism. Functionally, catalyzes the reduction of the glycolytic intermediate dihydroxyacetone phosphate (DHAP) to sn-glycerol 3-phosphate (G3P), the key precursor for phospholipid synthesis. The sequence is that of Glycerol-3-phosphate dehydrogenase [NAD(P)+] from Streptococcus pneumoniae (strain CGSP14).